Consider the following 951-residue polypeptide: Valine--tRNA ligase (951 aa).

The 'HIGH' region motif lies at 40–50 (PNVTGSLHMGH). Residues 551 to 555 (KMSKS) carry the 'KMSKS' region motif. Lys554 contributes to the ATP binding site. Positions 879–950 (MAGLIDVEAE…LLEQKAKIES (72 aa)) form a coiled coil.

It belongs to the class-I aminoacyl-tRNA synthetase family. ValS type 1 subfamily. Monomer.

The protein resides in the cytoplasm. The catalysed reaction is tRNA(Val) + L-valine + ATP = L-valyl-tRNA(Val) + AMP + diphosphate. Functionally, catalyzes the attachment of valine to tRNA(Val). As ValRS can inadvertently accommodate and process structurally similar amino acids such as threonine, to avoid such errors, it has a 'posttransfer' editing activity that hydrolyzes mischarged Thr-tRNA(Val) in a tRNA-dependent manner. This Pseudoalteromonas translucida (strain TAC 125) protein is Valine--tRNA ligase.